The primary structure comprises 418 residues: Serine hydroxymethyltransferase (418 aa).

Residues Leu-121 and 125 to 127 contribute to the (6S)-5,6,7,8-tetrahydrofolate site; that span reads GHL. At Lys-230 the chain carries N6-(pyridoxal phosphate)lysine. Position 355–357 (355–357) interacts with (6S)-5,6,7,8-tetrahydrofolate; the sequence is SPF.

This sequence belongs to the SHMT family. Homodimer. Requires pyridoxal 5'-phosphate as cofactor.

Its subcellular location is the cytoplasm. The enzyme catalyses (6R)-5,10-methylene-5,6,7,8-tetrahydrofolate + glycine + H2O = (6S)-5,6,7,8-tetrahydrofolate + L-serine. It participates in one-carbon metabolism; tetrahydrofolate interconversion. The protein operates within amino-acid biosynthesis; glycine biosynthesis; glycine from L-serine: step 1/1. Catalyzes the reversible interconversion of serine and glycine with tetrahydrofolate (THF) serving as the one-carbon carrier. This reaction serves as the major source of one-carbon groups required for the biosynthesis of purines, thymidylate, methionine, and other important biomolecules. Also exhibits THF-independent aldolase activity toward beta-hydroxyamino acids, producing glycine and aldehydes, via a retro-aldol mechanism. The protein is Serine hydroxymethyltransferase of Streptococcus agalactiae serotype III (strain NEM316).